Reading from the N-terminus, the 377-residue chain is Succinyl-diaminopimelate desuccinylase (377 aa).

Residue His-68 coordinates Zn(2+). Asp-70 is an active-site residue. Asp-101 provides a ligand contact to Zn(2+). Residue Glu-135 is the Proton acceptor of the active site. Residues Glu-136, Glu-164, and His-350 each coordinate Zn(2+).

This sequence belongs to the peptidase M20A family. DapE subfamily. In terms of assembly, homodimer. Zn(2+) serves as cofactor. Co(2+) is required as a cofactor.

It carries out the reaction N-succinyl-(2S,6S)-2,6-diaminopimelate + H2O = (2S,6S)-2,6-diaminopimelate + succinate. It functions in the pathway amino-acid biosynthesis; L-lysine biosynthesis via DAP pathway; LL-2,6-diaminopimelate from (S)-tetrahydrodipicolinate (succinylase route): step 3/3. Its function is as follows. Catalyzes the hydrolysis of N-succinyl-L,L-diaminopimelic acid (SDAP), forming succinate and LL-2,6-diaminopimelate (DAP), an intermediate involved in the bacterial biosynthesis of lysine and meso-diaminopimelic acid, an essential component of bacterial cell walls. The chain is Succinyl-diaminopimelate desuccinylase from Acinetobacter baumannii (strain AB0057).